Consider the following 191-residue polypeptide: Hypoxanthine/guanine phosphoribosyltransferase (191 aa).

Belongs to the purine/pyrimidine phosphoribosyltransferase family. Archaeal HPRT subfamily. Homodimer.

The protein localises to the cytoplasm. It carries out the reaction IMP + diphosphate = hypoxanthine + 5-phospho-alpha-D-ribose 1-diphosphate. It catalyses the reaction GMP + diphosphate = guanine + 5-phospho-alpha-D-ribose 1-diphosphate. Its pathway is purine metabolism; IMP biosynthesis via salvage pathway; IMP from hypoxanthine: step 1/1. In terms of biological role, catalyzes a salvage reaction resulting in the formation of IMP that is energically less costly than de novo synthesis. The sequence is that of Hypoxanthine/guanine phosphoribosyltransferase from Methanocella paludicola (strain DSM 17711 / JCM 13418 / NBRC 101707 / SANAE).